The primary structure comprises 564 residues: uncharacterized protein (564 aa).

A compositionally biased stretch (polar residues) spans 1-17 (MRRPSTASLTRTPSRAS). Residues 1-564 (MRRPSTASLT…ASTPSSEVIS (564 aa)) are disordered. 2 stretches are compositionally biased toward low complexity: residues 79–97 (SPRTPSRASPTRRLPRASP) and 114–134 (SPTGTPSTASPTGTPSSASPT). The segment covering 153–168 (RSPSTASLTRTPSRAS) has biased composition (polar residues). Residues 170 to 179 (TRWPPRASPT) are compositionally biased toward low complexity. Residues 250–271 (GSPPRASPMTPPRASPRTPPRA) show a composition bias toward pro residues. Positions 272-299 (SPTTTPSRASLTRTPSWASPTTTPSRAS) are enriched in low complexity. The span at 318–351 (PTGTPSRASPTGTPSRASLTGSPSRASLTGTPSR) shows a compositional bias: polar residues. Residues 378-416 (RASLTGTSSTASLTRTPSRASLTRTQSSSSLTRTPSMAS) are compositionally biased toward low complexity. The span at 467 to 564 (SRASLTRTPS…ASTPSSEVIS (98 aa)) shows a compositional bias: polar residues.

This is an uncharacterized protein from Homo sapiens (Human).